Reading from the N-terminus, the 209-residue chain is Probable glutathione peroxidase 8-A (209 aa).

Residues 18–40 (VSVVFLSMLLCTGILCVLQLGFL) traverse the membrane as a helical segment. Residue Cys79 is part of the active site.

Belongs to the glutathione peroxidase family.

It is found in the membrane. The catalysed reaction is 2 glutathione + H2O2 = glutathione disulfide + 2 H2O. The sequence is that of Probable glutathione peroxidase 8-A (gpx8-a) from Xenopus laevis (African clawed frog).